Consider the following 309-residue polypeptide: Minor serine/threonine-protein phosphatase PP2A-1 catalytic subunit (309 aa).

The Mn(2+) site is built by D57, H59, D85, and N117. H118 acts as the Proton donor in catalysis. Positions 167 and 241 each coordinate Mn(2+). A Leucine methyl ester modification is found at L309.

This sequence belongs to the PPP phosphatase family. PP-2A subfamily. Mn(2+) is required as a cofactor.

The catalysed reaction is O-phospho-L-seryl-[protein] + H2O = L-seryl-[protein] + phosphate. The enzyme catalyses O-phospho-L-threonyl-[protein] + H2O = L-threonyl-[protein] + phosphate. In terms of biological role, essential role in cell cycle control. PP2A may be involved in controlling the entry into mitosis, possibly acting as an inhibitor. The chain is Minor serine/threonine-protein phosphatase PP2A-1 catalytic subunit (ppa1) from Schizosaccharomyces pombe (strain 972 / ATCC 24843) (Fission yeast).